A 185-amino-acid chain; its full sequence is Threonylcarbamoyl-AMP synthase (185 aa).

Positions 7–185 constitute a YrdC-like domain; it reads AAQRRAARAH…IDFASGRVLR (179 aa).

The protein belongs to the SUA5 family. TsaC subfamily.

The protein localises to the cytoplasm. The enzyme catalyses L-threonine + hydrogencarbonate + ATP = L-threonylcarbamoyladenylate + diphosphate + H2O. Required for the formation of a threonylcarbamoyl group on adenosine at position 37 (t(6)A37) in tRNAs that read codons beginning with adenine. Catalyzes the conversion of L-threonine, HCO(3)(-)/CO(2) and ATP to give threonylcarbamoyl-AMP (TC-AMP) as the acyladenylate intermediate, with the release of diphosphate. The protein is Threonylcarbamoyl-AMP synthase of Laribacter hongkongensis (strain HLHK9).